A 729-amino-acid polypeptide reads, in one-letter code: Replication restart protein PriA (729 aa).

Residues 209–376 (QTALGRFRSF…QSGAYRLLQL (168 aa)) enclose the Helicase ATP-binding domain. 222 to 229 (GITGSGKT) contacts ATP. The DEAH box motif lies at 319–322 (DEEH). Positions 436, 439, 445, 448, 463, 466, 476, and 479 each coordinate Zn(2+). A Helicase C-terminal domain is found at 471 to 623 (PIPFKCPDCG…YAVFAENELN (153 aa)).

It belongs to the helicase family. PriA subfamily. Interacts with PriB with high affinity in the absence of DNA. Component of the replication restart primosome. It depends on Zn(2+) as a cofactor.

The catalysed reaction is Couples ATP hydrolysis with the unwinding of duplex DNA by translocating in the 3'-5' direction.. The enzyme catalyses ATP + H2O = ADP + phosphate + H(+). Its activity is regulated as follows. Helicase and ATPase activities on forked DNA are stimulated by PriB; E.coli PriB does not stimulate this helicase. PriA:PriB complex-catalyzed duplex DNA winding is inhibited by CGS 15943 (CHEBI:131351). CGS 15943 decreases ATP hydrolysis and decreases PriA's affinity for DNA. In terms of biological role, initiates the restart of stalled replication forks, which reloads the replicative helicase on sites other than the origin of replication. Recognizes and binds to abandoned replication forks and remodels them to uncover a helicase loading site. Promotes assembly of the primosome at these replication forks. DNA helicase with greatest unwinding activity on forked DNA substrates with relatively short duplex lagging strand arms. A DNA-dependent ATPase. Required for DNA transformation and DNA repair. Binds single-stranded (ss)DNA and replication fork-like DNA but not double-stranded (ds)DNA. This chain is Replication restart protein PriA, found in Neisseria gonorrhoeae (strain ATCC 700825 / FA 1090).